Here is a 559-residue protein sequence, read N- to C-terminus: MKFMKIGTKPDTFYTQEASRILITDTPNDLVIRINNTTYHLHRSCLVPKCGLLRRLCTDLEESDTVTIELNDIPGGADAFELCAKFCYDITINLSAHNLVNALCASKFLRMSDSVDKGNLLPKLEAFFHSCILQGWKDSIVTLQSTTKLPEWCENLGIVRKCIDSIVEKILTPTSEVSWSHTYTRPGYAKRQHHSVPRDWWTEDISDLDLDLFRCVITAARSTFTLPPQLIGEALHVYTCRWLPYFKSNSHSGFSVKENEAALERHRRLVNTVVNMIPADKGSVSEGFLLRLVSIASYVRASLTTKTELIRKSSLQLEEATLEDLLLPSHSSSHLHRYDTDLVATVLESFLMLWRRQSSAHLSSNNTQLLHSIRKVAKLIDSYLQAVAQDVHMPVSKFVSLSEAVPDIARQSHDRLYKAINIFLKVHPEISKEEKKRLCRSLDCQKLSAQVRAHAVKNERMPLRTVVQALFFDQESGSKGASSRSESQELFTRGKETPTDEHSMMHKLHLGPASTGKAKNVLEEGCKRGEEKTRSSTDPKKIVWKGTGSEHKHHISRDR.

Residues 28–96 (NDLVIRINNT…CYDITINLSA (69 aa)) enclose the BTB domain. Residues 199-476 (DWWTEDISDL…VQALFFDQES (278 aa)) enclose the NPH3 domain. Tyr-417 is subject to Phosphotyrosine. Positions 477–489 (GSKGASSRSESQE) are enriched in low complexity. 2 disordered regions span residues 477–502 (GSKG…TDEH) and 524–559 (EGCK…SRDR). 2 stretches are compositionally biased toward basic and acidic residues: residues 492 to 502 (TRGKETPTDEH) and 524 to 541 (EGCK…DPKK).

It belongs to the NPH3 family.

Its pathway is protein modification; protein ubiquitination. Functionally, may act as a substrate-specific adapter of an E3 ubiquitin-protein ligase complex (CUL3-RBX1-BTB) which mediates the ubiquitination and subsequent proteasomal degradation of target proteins. In Arabidopsis thaliana (Mouse-ear cress), this protein is BTB/POZ domain-containing protein At5g47800.